A 347-amino-acid polypeptide reads, in one-letter code: GPN-loop GTPase 2 (347 aa).

12-17 (GSGKST) contacts GTP. Residues 69 to 71 (GPN) carry the Gly-Pro-Asn (GPN)-loop; involved in dimer interface motif. 175 to 178 (SKID) contacts GTP.

Belongs to the GPN-loop GTPase family. Heterodimers with NPA3/GPN1 or GPN3. Binds to RNA polymerase II (RNAPII).

The protein localises to the cytoplasm. Small GTPase required for proper localization of RNA polymerase II and III (RNAPII and RNAPIII). May act at an RNAP assembly step prior to nuclear import. Required for establishment of sister chromatid cohesion. This is GPN-loop GTPase 2 from Saccharomyces cerevisiae (strain ATCC 204508 / S288c) (Baker's yeast).